Reading from the N-terminus, the 1205-residue chain is MGRENELIQAVKSGDVGAVQKFLAKFRTPKSKLLGSTKRLNVNHQDADGFSALHHAALSGNSELLLLLLEMQASVDIKDGNGMRPLHYAAWQGQPEPVRLLLRASASVNAASHDGQIPLHLAAQYGHYEVSETLLQHQSNPCHVNKGKKTPLDLACEFGRVKVVQLLLNSHLCVSLLEGTSKDPTDPNFTTPLHLAAKNGHLEVIRLLLKLGIEINKVTKMGTALHEAALCGKTEVVKLLIENGVDVNIRNTYNQTALDIVNQFTTTHASIDIKQLLREASGILKVRALKDFWNAHDPTALNIRAGDLITVLEQHPDGRWKGHIHDPQKGTDRVGFFPPSIVEVISKRLGSTLSRNITVPSHQHLAKTVLTLPIQHSPGSQLGINPDTSVAGDRHSVGSESSVRSAGSGQSCEGQQINTALLIENAQTMDFGSENLQNCQTFPGPVSGHHLSTILPVEKNPGDYLQGKDAEQIFCWLRGFQMETYVGNFISAGYDLPTIMRVTPEDLTAIGVTKPGHRKMISTEIGKLIVADGLPQQIPVDLWDWLSQLGLPEYHKQLSENGYESLSTVTELTWEGLQEIGIHRLGHQKKLLLGVKRLLDLQKGYPIGGTLRRRILGSQDTVAVVEPPENGDLPVTPKLLTFQGAELSQELQSALTRGNEQLCTGRRSFSQESISSRSQGSGHSQESASSYPVLPVHLQGVDLNLPERNHPEGTDQILQNHWVPNGCLIQPEPPAPPPKPALKKRSLSACRYALSDGEPEEEEEKKIATAGTGTLSTYATLTRRPGRSCLTNGKPEKKVQRSQSFAVRARRKGPPPPPPKRLSSMSSAEGQSPEGQSSVKTIAAQLKDIGRGTGFSASTSKATDTEVLEGSGTRRRTVSESAAGLGGRLSLPLTTKKDEEEERKEEPISSQHSSSESIPFAEEGNLTIKQRPKPPGAKLEQDATSELSPTQESQLQSAEAQRHLESSAVLAKPVTVVLAQARPQIAAKPQIGPKPDTGARAPPATSIPKNEEHDFNLTESDTVKRRPKVKEKEEESPKAPLANNSPSLIPSQEPLTQDTLIAKIADIDKRLLSLGEVEDSVKKTGIDTRSTGVSISQTHLVISGPQQVLQKPSRAVTGPLFPAGSILWDEESEASSREQTCIPQQSISNSDKGPPVFTSSLQNTEELQDTRGKSCRETVQLTKNILDDISTMFDDLAEQLEAMLD.

6 ANK repeats span residues 48 to 77 (DGFSALHHAALSGNSELLLLLLEMQASVDI), 81 to 110 (NGMRPLHYAAWQGQPEPVRLLLRASASVNA), 114 to 143 (DGQIPLHLAAQYGHYEVSETLLQHQSNPCH), 147 to 176 (GKKTPLDLACEFGRVKVVQLLLNSHLCVSL), 188 to 217 (NFTTPLHLAAKNGHLEVIRLLLKLGIEINK), and 220 to 249 (KMGTALHEAALCGKTEVVKLLIENGVDVNI). In terms of domain architecture, SH3 spans 281-347 (SGILKVRALK…PPSIVEVISK (67 aa)). 2 stretches are compositionally biased toward polar residues: residues 377–388 (SPGSQLGINPDT) and 398–411 (GSESSVRSAGSGQS). The segment at 377–411 (SPGSQLGINPDTSVAGDRHSVGSESSVRSAGSGQS) is disordered. 2 SAM domains span residues 468-531 (KDAE…LIVA) and 537-601 (QIPV…LLDL). Low complexity predominate over residues 666–687 (RRSFSQESISSRSQGSGHSQES). Disordered regions lie at residues 666–689 (RRSFSQESISSRSQGSGHSQESAS), 784–964 (RPGR…QRHL), 984–1054 (QIAA…SQEP), and 1132–1155 (SEASSREQTCIPQQSISNSDKGPP). Over residues 823-840 (SSMSSAEGQSPEGQSSVK) the composition is skewed to polar residues. Positions 908-919 (ISSQHSSSESIP) are enriched in low complexity. Over residues 942–959 (DATSELSPTQESQLQSAE) the composition is skewed to polar residues. Over residues 1009–1037 (KNEEHDFNLTESDTVKRRPKVKEKEEESP) the composition is skewed to basic and acidic residues. 2 stretches are compositionally biased toward polar residues: residues 1042-1054 (ANNSPSLIPSQEP) and 1137-1155 (REQTCIPQQSISNSDKGPP).

In Xenopus laevis (African clawed frog), this protein is Caskin-2 (caskin2).